Here is a 1342-residue protein sequence, read N- to C-terminus: DNA-directed RNA polymerase subunit beta (1342 aa).

It belongs to the RNA polymerase beta chain family. In terms of assembly, the RNAP catalytic core consists of 2 alpha, 1 beta, 1 beta' and 1 omega subunit. When a sigma factor is associated with the core the holoenzyme is formed, which can initiate transcription.

The catalysed reaction is RNA(n) + a ribonucleoside 5'-triphosphate = RNA(n+1) + diphosphate. Its function is as follows. DNA-dependent RNA polymerase catalyzes the transcription of DNA into RNA using the four ribonucleoside triphosphates as substrates. This is DNA-directed RNA polymerase subunit beta from Klebsiella pneumoniae subsp. pneumoniae (strain ATCC 700721 / MGH 78578).